A 141-amino-acid polypeptide reads, in one-letter code: uncharacterized protein (141 aa).

One can recognise a Ferritin-like diiron domain in the interval 13–141 (VTKGTELEKE…LKGILDRYFK (129 aa)). Fe cation is bound by residues Glu-63, His-66, Glu-125, and His-128.

This is an uncharacterized protein from Methanocaldococcus jannaschii (strain ATCC 43067 / DSM 2661 / JAL-1 / JCM 10045 / NBRC 100440) (Methanococcus jannaschii).